The chain runs to 250 residues: Dihydroorotate dehydrogenase B (NAD(+)), electron transfer subunit (250 aa).

The region spanning 1 to 94 is the FAD-binding FR-type domain; that stretch reads MKVVAQEEIA…MGPQGNGFDL (94 aa). FAD contacts are provided by residues 45-48, 62-64, and 69-70; these read RPIS, IYR, and GT. 4 residues coordinate [2Fe-2S] cluster: Cys-214, Cys-219, Cys-222, and Cys-237.

It belongs to the PyrK family. Heterotetramer of 2 PyrK and 2 PyrD type B subunits. It depends on [2Fe-2S] cluster as a cofactor. FAD serves as cofactor.

Its pathway is pyrimidine metabolism; UMP biosynthesis via de novo pathway; orotate from (S)-dihydroorotate (NAD(+) route): step 1/1. Functionally, responsible for channeling the electrons from the oxidation of dihydroorotate from the FMN redox center in the PyrD type B subunit to the ultimate electron acceptor NAD(+). This Streptococcus pneumoniae serotype 4 (strain ATCC BAA-334 / TIGR4) protein is Dihydroorotate dehydrogenase B (NAD(+)), electron transfer subunit.